A 675-amino-acid polypeptide reads, in one-letter code: tRNA 5-methylaminomethyl-2-thiouridine biosynthesis bifunctional protein MnmC (675 aa).

The segment at 1–245 (MANLPIQHAS…KREMLSGLLP (245 aa)) is tRNA (mnm(5)s(2)U34)-methyltransferase. The interval 271-675 (IGGGIASVLT…LLKGKPVTHD (405 aa)) is FAD-dependent cmnm(5)s(2)U34 oxidoreductase.

The protein in the N-terminal section; belongs to the methyltransferase superfamily. tRNA (mnm(5)s(2)U34)-methyltransferase family. In the C-terminal section; belongs to the DAO family. FAD is required as a cofactor.

It is found in the cytoplasm. It carries out the reaction 5-aminomethyl-2-thiouridine(34) in tRNA + S-adenosyl-L-methionine = 5-methylaminomethyl-2-thiouridine(34) in tRNA + S-adenosyl-L-homocysteine + H(+). In terms of biological role, catalyzes the last two steps in the biosynthesis of 5-methylaminomethyl-2-thiouridine (mnm(5)s(2)U) at the wobble position (U34) in tRNA. Catalyzes the FAD-dependent demodification of cmnm(5)s(2)U34 to nm(5)s(2)U34, followed by the transfer of a methyl group from S-adenosyl-L-methionine to nm(5)s(2)U34, to form mnm(5)s(2)U34. The polypeptide is tRNA 5-methylaminomethyl-2-thiouridine biosynthesis bifunctional protein MnmC (Pectobacterium atrosepticum (strain SCRI 1043 / ATCC BAA-672) (Erwinia carotovora subsp. atroseptica)).